The chain runs to 185 residues: Ribosome-recycling factor (185 aa).

Belongs to the RRF family.

The protein resides in the cytoplasm. In terms of biological role, responsible for the release of ribosomes from messenger RNA at the termination of protein biosynthesis. May increase the efficiency of translation by recycling ribosomes from one round of translation to another. The protein is Ribosome-recycling factor of Salinispora tropica (strain ATCC BAA-916 / DSM 44818 / JCM 13857 / NBRC 105044 / CNB-440).